Consider the following 586-residue polypeptide: Kinesin-like protein KIF25 (586 aa).

Positions 10-94 form a coiled coil; that stretch reads SFWEQRTRQL…VIQKLNQDIQ (85 aa). The Kinesin motor domain maps to 173-565; it reads NIRVHCRIRP…LGFGIRARQV (393 aa). ATP is bound at residue 267–274; sequence GQTGSGKS. 2 disordered regions span residues 417–460 and 564–586; these read TADQ…AGRA and QVQR…RRPD.

The protein belongs to the TRAFAC class myosin-kinesin ATPase superfamily. Kinesin family. In terms of assembly, homotetramer.

It is found in the cytoplasm. Its subcellular location is the cytoskeleton. The protein resides in the microtubule organizing center. The protein localises to the centrosome. Functionally, minus-end microtubule-dependent motor protein. Acts as a negative regulator of centrosome separation required to prevent premature centrosome separation during interphase. Required to maintain a centered nucleus to ensure that the spindle is stably oriented at the onset of mitosis. May also act as a negative regulator of amino acid starvation-induced autophagy. The chain is Kinesin-like protein KIF25 from Macaca fascicularis (Crab-eating macaque).